A 537-amino-acid polypeptide reads, in one-letter code: Tripeptidyl aminopeptidase (537 aa).

The signal sequence occupies residues 1–36; sequence MRKSSIRRRATAFGTAGALVTATLIAGAVSAPAASA. A propeptide spanning residues 37-39 is cleaved from the precursor; sequence APA. The region spanning 119-497 is the AB hydrolase-1 domain; the sequence is GALIYNPGGP…SRLITERDAG (379 aa). The active-site Nucleophile is the S245. D470 is an active-site residue. Residue H499 is the Proton donor of the active site.

The protein belongs to the peptidase S33 family.

Its subcellular location is the secreted. Its function is as follows. Cleaves tripeptides from the N-termini of proteins. Does not cleave mono- or dipeptides, or N-terminally blocked peptides. In Streptomyces lividans, this protein is Tripeptidyl aminopeptidase.